The chain runs to 37 residues: Large ribosomal subunit protein bL36c (37 aa).

This sequence belongs to the bacterial ribosomal protein bL36 family.

Its subcellular location is the plastid. It is found in the chloroplast. This Phalaenopsis aphrodite subsp. formosana (Moth orchid) protein is Large ribosomal subunit protein bL36c.